Here is a 994-residue protein sequence, read N- to C-terminus: Chloride channel protein E (994 aa).

Residues 1–33 are disordered; the sequence is MTRKENEESESLSSSSSPIDNSNNNNNNNNHSI. Residues 1–163 are Cytoplasmic-facing; it reads MTRKENEESE…HWLGKERIST (163 aa). Residues 11–32 are compositionally biased toward low complexity; it reads SLSSSSSPIDNSNNNNNNNNHS. 11 consecutive transmembrane segments (helical) span residues 164–184, 227–247, 271–291, 300–320, 334–354, 362–382, 410–430, 449–469, 505–525, 527–547, and 554–574; these read LLFI…CDFL, IVFV…ISFI, VLGF…SAAG, FMHA…FGAI, ALTS…LFAI, VMGN…IFFL, LITF…FVFI, IILV…AGPL, LLVF…LPIP, GAIT…GEIL, and QAIE…SGTI. Residues 644–705 form the CBS 1 domain; the sequence is MKKNINYLSM…LDIHIENIEQ (62 aa). 3 disordered regions span residues 715-767, 802-822, and 846-872; these read FVNN…NSEN, IKPN…SDFE, and DENS…GDGI. 2 stretches are compositionally biased toward low complexity: residues 717 to 764 and 809 to 822; these read NNNN…NSNN and SSSN…SDFE. Acidic residues predominate over residues 859–870; it reads HDDEDDDEEEGD. In terms of domain architecture, CBS 2 spans 944–994; sequence MDLAPSQVPDLTPLNKVFHLFTMLGLGFTYVTSLGKLVGVITKNSLMEQDL.

It belongs to the chloride channel (TC 2.A.49) family.

The protein resides in the membrane. Its function is as follows. Voltage-gated chloride channel. Chloride channels may have several functions including the regulation of cell volume, membrane potential stabilization and signal transduction. This Dictyostelium discoideum (Social amoeba) protein is Chloride channel protein E (clcE).